Consider the following 101-residue polypeptide: UPF0473 protein EF_1204 (101 aa).

Belongs to the UPF0473 family.

This is UPF0473 protein EF_1204 from Enterococcus faecalis (strain ATCC 700802 / V583).